A 301-amino-acid polypeptide reads, in one-letter code: tRNA dimethylallyltransferase (301 aa).

Residue 5–12 (GPTASGKS) participates in ATP binding. Substrate is bound at residue 7–12 (TASGKS). Positions 30–33 (DSMQ) are interaction with substrate tRNA.

It belongs to the IPP transferase family. As to quaternary structure, monomer. Mg(2+) is required as a cofactor.

The catalysed reaction is adenosine(37) in tRNA + dimethylallyl diphosphate = N(6)-dimethylallyladenosine(37) in tRNA + diphosphate. Catalyzes the transfer of a dimethylallyl group onto the adenine at position 37 in tRNAs that read codons beginning with uridine, leading to the formation of N6-(dimethylallyl)adenosine (i(6)A). The protein is tRNA dimethylallyltransferase of Rhodopseudomonas palustris (strain TIE-1).